We begin with the raw amino-acid sequence, 425 residues long: Aromatic prenyl transferase PC-22 (425 aa).

L-tryptophan is bound by residues 83–84 (GI) and glutamate 92. Positions 107, 198, 200, 265, 267, 269, 345, 410, and 414 each coordinate substrate.

This sequence belongs to the tryptophan dimethylallyltransferase family. Homodimer.

The protein operates within secondary metabolite biosynthesis. Its function is as follows. Aromatic prenyl transferase; part of the gene cluster that mediates the biosynthesis of the indole diterpenes penitrems. The geranylgeranyl diphosphate (GGPP) synthase penG catalyzes the first step in penitrem biosynthesis via conversion of farnesyl pyrophosphate and isopentyl pyrophosphate into geranylgeranyl pyrophosphate (GGPP). Condensation of indole-3-glycerol phosphate with GGPP by the prenyl transferase penC then forms 3-geranylgeranylindole (3-GGI). Epoxidation by the FAD-dependent monooxygenase penM leads to a epoxidized-GGI that is substrate of the terpene cyclase penB for cyclization to yield paspaline. Paspaline is subsequently converted to 13-desoxypaxilline by the cytochrome P450 monooxygenase penP, the latter being then converted to paxilline by the cytochrome P450 monooxygenase penQ. Paxilline is converted to beta-paxitriol via C-10 ketoreduction by the short-chain dehydrogenase PC-15 which can be monoprenylated at the C-20 by the indole diterpene prenyltransferase penD. A two-step elimination (acetylation and elimination) process performed by the O-acetyltransferase PC-16 and the P.simplicissimum ptmI-ortholog not yet identified in P.crustosum, leads to the production of the prenylated form of penijanthine. The FAD-linked oxidoreductase ptmO then converts the prenylated form of penijanthine into PC-M5 which is in turn transformed into PC-M4 by the aromatic dimethylallyltransferase PC-22. A series of oxidation steps involving 4 cytochrome P450 monooxygenases (PC-21, PC-05, PC-23, PC-20) and a FAD-dependent monooxygenase (PC-14) are required for the transformation of PC-M4 to penitrems A and E. Synthesis of these final products is proposed to proceed via penitrems D and C (PC-21, PC-05, PC-14) and penitrems B and F (PC-21, PC-05, PC-14, PC-23). The chain is Aromatic prenyl transferase PC-22 from Penicillium crustosum (Blue mold fungus).